The following is a 334-amino-acid chain: L-lactate dehydrogenase C chain (334 aa).

NAD(+) is bound by residues 30–58, Arg100, and Asn139; that span reads GQVGMACAVSVLLKELADELALVDILEDK. Substrate is bound by residues Asn139 and Arg170. Catalysis depends on His194, which acts as the Proton acceptor. Thr249 is a binding site for substrate.

It belongs to the LDH/MDH superfamily. LDH family. As to quaternary structure, homotetramer.

The protein localises to the cytoplasm. The catalysed reaction is (S)-lactate + NAD(+) = pyruvate + NADH + H(+). The protein operates within fermentation; pyruvate fermentation to lactate; (S)-lactate from pyruvate: step 1/1. The polypeptide is L-lactate dehydrogenase C chain (ldhc) (Xenopus laevis (African clawed frog)).